Reading from the N-terminus, the 340-residue chain is NADH-quinone oxidoreductase subunit H (340 aa).

8 helical membrane-spanning segments follow: residues threonine 4–isoleucine 24, tyrosine 78–isoleucine 98, valine 113–alanine 133, valine 151–methionine 171, methionine 184–isoleucine 204, serine 244–phenylalanine 264, isoleucine 273–valine 293, and valine 316–valine 336.

The protein belongs to the complex I subunit 1 family. As to quaternary structure, NDH-1 is composed of 14 different subunits. Subunits NuoA, H, J, K, L, M, N constitute the membrane sector of the complex.

It is found in the cell inner membrane. It catalyses the reaction a quinone + NADH + 5 H(+)(in) = a quinol + NAD(+) + 4 H(+)(out). NDH-1 shuttles electrons from NADH, via FMN and iron-sulfur (Fe-S) centers, to quinones in the respiratory chain. The immediate electron acceptor for the enzyme in this species is believed to be ubiquinone. Couples the redox reaction to proton translocation (for every two electrons transferred, four hydrogen ions are translocated across the cytoplasmic membrane), and thus conserves the redox energy in a proton gradient. This subunit may bind ubiquinone. The sequence is that of NADH-quinone oxidoreductase subunit H from Legionella pneumophila (strain Corby).